The sequence spans 246 residues: Eukaryotic translation initiation factor 6 (246 aa).

Residues serine 174 and serine 175 each carry the phosphoserine; by CK1 modification.

It belongs to the eIF-6 family. In terms of assembly, monomer. Associates with the 60S ribosomal subunit. Phosphorylation at Ser-174 and Ser-175 promotes nuclear export.

The protein resides in the cytoplasm. Its subcellular location is the nucleus. It is found in the nucleolus. Its function is as follows. Binds to the 60S ribosomal subunit and prevents its association with the 40S ribosomal subunit to form the 80S initiation complex in the cytoplasm. Is also involved in ribosome biogenesis. Associates with pre-60S subunits in the nucleus and is involved in its nuclear export. In Verticillium alfalfae (strain VaMs.102 / ATCC MYA-4576 / FGSC 10136) (Verticillium wilt of alfalfa), this protein is Eukaryotic translation initiation factor 6.